A 144-amino-acid polypeptide reads, in one-letter code: Large ribosomal subunit protein uL13 (144 aa).

The protein belongs to the universal ribosomal protein uL13 family. In terms of assembly, part of the 50S ribosomal subunit.

Its function is as follows. This protein is one of the early assembly proteins of the 50S ribosomal subunit, although it is not seen to bind rRNA by itself. It is important during the early stages of 50S assembly. The protein is Large ribosomal subunit protein uL13 of Clostridium perfringens (strain 13 / Type A).